Here is a 198-residue protein sequence, read N- to C-terminus: Small ribosomal subunit protein uS4 (198 aa).

An S4 RNA-binding domain is found at 88 to 153 (LRLDNVMFRM…AQRYKDILEV (66 aa)).

The protein belongs to the universal ribosomal protein uS4 family. In terms of assembly, part of the 30S ribosomal subunit. Contacts protein S5. The interaction surface between S4 and S5 is involved in control of translational fidelity.

In terms of biological role, one of the primary rRNA binding proteins, it binds directly to 16S rRNA where it nucleates assembly of the body of the 30S subunit. With S5 and S12 plays an important role in translational accuracy. This is Small ribosomal subunit protein uS4 from Lachnoclostridium phytofermentans (strain ATCC 700394 / DSM 18823 / ISDg) (Clostridium phytofermentans).